We begin with the raw amino-acid sequence, 416 residues long: Serine carboxypeptidase S10 family member 1 (416 aa).

A signal peptide spans 1-20; the sequence is MMKLLFIIISIIFVINVSNS. N-linked (GlcNAc...) asparagine glycosylation is found at Asn-33 and Asn-84. Ser-156 is an active-site residue. Asn-235, Asn-273, and Asn-295 each carry an N-linked (GlcNAc...) asparagine glycan. Asp-338 is a catalytic residue. N-linked (GlcNAc...) asparagine glycosylation occurs at Asn-385. His-396 is an active-site residue.

This sequence belongs to the peptidase S10 family.

The protein resides in the secreted. Functionally, probable carboxypeptidase. This is Serine carboxypeptidase S10 family member 1 from Dictyostelium discoideum (Social amoeba).